A 593-amino-acid chain; its full sequence is Aspartate--tRNA ligase (593 aa).

Position 181 (Glu-181) interacts with L-aspartate. Residues 205-208 (QLYK) form an aspartate region. Residue Arg-227 participates in L-aspartate binding. ATP-binding positions include 227–229 (RDE) and Gln-236. His-455 contributes to the L-aspartate binding site. Residue Glu-489 participates in ATP binding. Residue Arg-496 coordinates L-aspartate. Residue 541 to 544 (GLDR) participates in ATP binding.

Belongs to the class-II aminoacyl-tRNA synthetase family. Type 1 subfamily. Homodimer.

Its subcellular location is the cytoplasm. The enzyme catalyses tRNA(Asp) + L-aspartate + ATP = L-aspartyl-tRNA(Asp) + AMP + diphosphate. Catalyzes the attachment of L-aspartate to tRNA(Asp) in a two-step reaction: L-aspartate is first activated by ATP to form Asp-AMP and then transferred to the acceptor end of tRNA(Asp). In Ruminiclostridium cellulolyticum (strain ATCC 35319 / DSM 5812 / JCM 6584 / H10) (Clostridium cellulolyticum), this protein is Aspartate--tRNA ligase.